Reading from the N-terminus, the 62-residue chain is Calmodulin regulator protein PCP4 (62 aa).

The disordered stretch occupies residues 1–39 (MSERQGAGATNGKDKTSGENDGQKKVQEEFDIDMDAPET). The span at 12-28 (GKDKTSGENDGQKKVQE) shows a compositional bias: basic and acidic residues. Residues 28–40 (EEFDIDMDAPETE) form an acidic; binds calcium and is required for modulating the calcium-binding kinetics of calmodulin region. The IQ domain maps to 39–62 (TERAAVAIQSQFRKFQKKKAGSQS).

The protein belongs to the PCP4 family. Binds to both calcium-free and calcium-bound calmodulin. The affinity for the calcium-bound form is 50-fold greater.

In terms of biological role, functions as a modulator of calcium-binding by calmodulin. Thereby, regulates calmodulin activity and the different processes it controls. For instance, may play a role in neuronal differentiation through activation of calmodulin-dependent kinase signaling pathways. The protein is Calmodulin regulator protein PCP4 of Homo sapiens (Human).